Reading from the N-terminus, the 254-residue chain is Glucosamine-6-phosphate deaminase (254 aa).

Catalysis depends on aspartate 65, which acts as the Proton acceptor; for enolization step. The active-site For ring-opening step is the asparagine 134. The active-site Proton acceptor; for ring-opening step is histidine 136. Glutamate 141 (for ring-opening step) is an active-site residue.

The protein belongs to the glucosamine/galactosamine-6-phosphate isomerase family. NagB subfamily.

The enzyme catalyses alpha-D-glucosamine 6-phosphate + H2O = beta-D-fructose 6-phosphate + NH4(+). It participates in amino-sugar metabolism; N-acetylneuraminate degradation; D-fructose 6-phosphate from N-acetylneuraminate: step 5/5. Functionally, catalyzes the reversible isomerization-deamination of glucosamine 6-phosphate (GlcN6P) to form fructose 6-phosphate (Fru6P) and ammonium ion. The sequence is that of Glucosamine-6-phosphate deaminase from Corynebacterium aurimucosum (strain ATCC 700975 / DSM 44827 / CIP 107346 / CN-1) (Corynebacterium nigricans).